We begin with the raw amino-acid sequence, 39 residues long: Cytochrome b6-f complex subunit 5 (39 aa).

Residues 5-25 (LLCGIVLGLVPVTLLGLFVSA) form a helical membrane-spanning segment.

This sequence belongs to the PetG family. The 4 large subunits of the cytochrome b6-f complex are cytochrome b6, subunit IV (17 kDa polypeptide, PetD), cytochrome f and the Rieske protein, while the 4 small subunits are PetG, PetL, PetM and PetN. The complex functions as a dimer.

It localises to the cellular thylakoid membrane. Functionally, component of the cytochrome b6-f complex, which mediates electron transfer between photosystem II (PSII) and photosystem I (PSI), cyclic electron flow around PSI, and state transitions. PetG is required for either the stability or assembly of the cytochrome b6-f complex. The polypeptide is Cytochrome b6-f complex subunit 5 (Prochlorococcus marinus (strain NATL1A)).